Here is a 713-residue protein sequence, read N- to C-terminus: Polyribonucleotide nucleotidyltransferase (713 aa).

Residues Asp-485 and Asp-491 each coordinate Mg(2+). The region spanning 552-611 is the KH domain; that stretch reads PRIYTMKIDPKKIKDVIGKGGATVRSLTEETGTSIDIDDDGTVKIAAVDKNAVQEVMSRI. The region spanning 621-689 is the S1 motif domain; the sequence is GVVYKGKVTR…RQGRIRLTMK (69 aa). The disordered stretch occupies residues 694-713; that stretch reads DQTKNEENLLQSEEGSPVQE. A compositionally biased stretch (polar residues) spans 701–713; sequence NLLQSEEGSPVQE.

It belongs to the polyribonucleotide nucleotidyltransferase family. In terms of assembly, component of the RNA degradosome, which is a multiprotein complex involved in RNA processing and mRNA degradation. It depends on Mg(2+) as a cofactor.

The protein localises to the cytoplasm. It carries out the reaction RNA(n+1) + phosphate = RNA(n) + a ribonucleoside 5'-diphosphate. Involved in mRNA degradation. Catalyzes the phosphorolysis of single-stranded polyribonucleotides processively in the 3'- to 5'-direction. This Histophilus somni (strain 2336) (Haemophilus somnus) protein is Polyribonucleotide nucleotidyltransferase.